Consider the following 194-residue polypeptide: Nucleoside triphosphate pyrophosphatase (194 aa).

The Proton acceptor role is filled by Asp-71.

The protein belongs to the Maf family. The cofactor is a divalent metal cation.

It is found in the cytoplasm. It carries out the reaction a ribonucleoside 5'-triphosphate + H2O = a ribonucleoside 5'-phosphate + diphosphate + H(+). The catalysed reaction is a 2'-deoxyribonucleoside 5'-triphosphate + H2O = a 2'-deoxyribonucleoside 5'-phosphate + diphosphate + H(+). Functionally, nucleoside triphosphate pyrophosphatase. May have a dual role in cell division arrest and in preventing the incorporation of modified nucleotides into cellular nucleic acids. The polypeptide is Nucleoside triphosphate pyrophosphatase (Paramagnetospirillum magneticum (strain ATCC 700264 / AMB-1) (Magnetospirillum magneticum)).